A 126-amino-acid polypeptide reads, in one-letter code: S-adenosylmethionine decarboxylase proenzyme (126 aa).

Residue S63 is the Schiff-base intermediate with substrate; via pyruvic acid of the active site. The residue at position 63 (S63) is a Pyruvic acid (Ser); by autocatalysis. Catalysis depends on H68, which acts as the Proton acceptor; for processing activity. C83 functions as the Proton donor; for catalytic activity in the catalytic mechanism.

It belongs to the prokaryotic AdoMetDC family. Type 1 subfamily. In terms of assembly, heterotetramer of two alpha and two beta chains arranged as a dimer of alpha/beta heterodimers. Requires pyruvate as cofactor. In terms of processing, is synthesized initially as an inactive proenzyme. Formation of the active enzyme involves a self-maturation process in which the active site pyruvoyl group is generated from an internal serine residue via an autocatalytic post-translational modification. Two non-identical subunits are generated from the proenzyme in this reaction, and the pyruvate is formed at the N-terminus of the alpha chain, which is derived from the carboxyl end of the proenzyme. The post-translation cleavage follows an unusual pathway, termed non-hydrolytic serinolysis, in which the side chain hydroxyl group of the serine supplies its oxygen atom to form the C-terminus of the beta chain, while the remainder of the serine residue undergoes an oxidative deamination to produce ammonia and the pyruvoyl group blocking the N-terminus of the alpha chain.

The catalysed reaction is S-adenosyl-L-methionine + H(+) = S-adenosyl 3-(methylsulfanyl)propylamine + CO2. It functions in the pathway amine and polyamine biosynthesis; S-adenosylmethioninamine biosynthesis; S-adenosylmethioninamine from S-adenosyl-L-methionine: step 1/1. Functionally, catalyzes the decarboxylation of S-adenosylmethionine to S-adenosylmethioninamine (dcAdoMet), the propylamine donor required for the synthesis of the polyamines spermine and spermidine from the diamine putrescine. The sequence is that of S-adenosylmethionine decarboxylase proenzyme from Clostridium kluyveri (strain NBRC 12016).